Here is an 891-residue protein sequence, read N- to C-terminus: MSAIDSCEHTVSWKLCEQKYNEATTLLSKLKKLLGNFKENCTSVVVDGHKKPRSESRKKYDAKKQHQSSHFATPVKGVESSEPTEKKKRNKEALWLRARQKKWKEIFELCQKITSLLGGTILIDVSFSMEKDVLTYLWMRVHYQVISFFKHRIYEASTQHDPELLSSLVTMHIQYLNSTIQFYTTLIAIIGELYHLQCLSPLTSFFTSCVTPKTILESPLRKQGSHNWKTSTNSQSRLAALFSSIFEDSCLEVDSVKRLLSGSPSSSSSPLKKDSSSNSLTYEPALTDHKPQYLVLCVYRSLIYIGDVHRYLAEVRSPNVPDYQVSRRYYVMAANVAPDYGVHFHQLGLIEVADARSSSRKSSSGQSSSLKGNVNVEDKRLIQALPAISFFFLSSISPNNVAASSAKTSLFIALKRCFGKTNDGSNPCLYHKESSAISLFLRLYAIAFSNTDADYIQDSGPLFKRVRFLLSESLKSGLFSESSLLQMTYCALAARVLAPFIGFSDSGEHGESYPNLKLATQTTTMFFEVLSDSVNSQLPLQALTSGVSSKKDGNFDDLVERRQYGSLSSNAVLMPMLLPLCVLTSSCLQNGDVWLTKDIRTGLSQIFNRLSFFLENTNQTAPDDSVLVRCSSKSIGLLFFFPLVKVCGVPRDTLQWLYFSNHYPFNEEGKGPQVDDSDALITIALDSLYVLLNMRAKSTPNSTSFSSPPTPHRSPFSGQAFTGMGLSNYSLMSSSSFPSAQSSPTSPFLSGTPSIANQSSSIASLQFGRMVDSLVGPVQPIPAQTTGCSVHSLQQRTFSNESPRAVDSGFSRTSTPFSESTSSYPLVSGNLSSCETHLNGSPQNGHLQGERVLFRPLRSPALNTFSTPATEPPEHLVLSELLKKMVNISNN.

Residues 48 to 64 are compositionally biased toward basic and acidic residues; it reads GHKKPRSESRKKYDAKK. The interval 48–86 is disordered; the sequence is GHKKPRSESRKKYDAKKQHQSSHFATPVKGVESSEPTEK. Serine 261, serine 263, serine 265, and serine 268 each carry phosphoserine. A disordered region spans residues 795-822; that stretch reads QRTFSNESPRAVDSGFSRTSTPFSESTS. The span at 810 to 822 shows a compositional bias: polar residues; sequence FSRTSTPFSESTS.

It is found in the nucleus. This is an uncharacterized protein from Schizosaccharomyces pombe (strain 972 / ATCC 24843) (Fission yeast).